The sequence spans 584 residues: 2-succinyl-5-enolpyruvyl-6-hydroxy-3-cyclohexene-1-carboxylate synthase (584 aa).

This sequence belongs to the TPP enzyme family. MenD subfamily. In terms of assembly, homodimer. Mg(2+) serves as cofactor. The cofactor is Mn(2+). Thiamine diphosphate is required as a cofactor.

It carries out the reaction isochorismate + 2-oxoglutarate + H(+) = 5-enolpyruvoyl-6-hydroxy-2-succinyl-cyclohex-3-ene-1-carboxylate + CO2. It participates in quinol/quinone metabolism; 1,4-dihydroxy-2-naphthoate biosynthesis; 1,4-dihydroxy-2-naphthoate from chorismate: step 2/7. It functions in the pathway quinol/quinone metabolism; menaquinone biosynthesis. Catalyzes the thiamine diphosphate-dependent decarboxylation of 2-oxoglutarate and the subsequent addition of the resulting succinic semialdehyde-thiamine pyrophosphate anion to isochorismate to yield 2-succinyl-5-enolpyruvyl-6-hydroxy-3-cyclohexene-1-carboxylate (SEPHCHC). The chain is 2-succinyl-5-enolpyruvyl-6-hydroxy-3-cyclohexene-1-carboxylate synthase from Bacillus anthracis.